The following is a 1358-amino-acid chain: Phosphoinositide 3-kinase regulatory subunit 4 (1358 aa).

The N-myristoyl glycine moiety is linked to residue Gly-2. The Protein kinase domain occupies 26-324 (FEYDKSLGST…AFPEVFYTFL (299 aa)). ATP-binding positions include 32–40 (LGSTRFFKV) and Lys-53. Asp-148 functions as the Proton acceptor in the catalytic mechanism. HEAT repeat units lie at residues 413-450 (ILLD…LVQE), 458-495 (IYPE…TALR), 572-610 (KAND…YVGW), and 612-648 (SSSI…LGLL). Ser-808, Ser-813, Ser-853, and Ser-865 each carry phosphoserine. The disordered stretch occupies residues 875-899 (LPKTSDHEVVPTGKSPRSESSAGVC). WD repeat units lie at residues 991–1030 (EHKS…GKTT), 1040–1079 (RIGG…LPKS), 1093–1134 (KEDG…NAWT), 1139–1178 (LKSG…PISS), 1182–1223 (PSRA…RRLT), and 1237–1278 (PSPH…RSYV). The tract at residues 1307 to 1326 (KQKVGPSDDTPRRGPESLPV) is disordered. The span at 1315–1326 (DTPRRGPESLPV) shows a compositional bias: basic and acidic residues. Residue Thr-1316 is modified to Phosphothreonine. The stretch at 1327–1358 (GHHDIITDIATFQTTQGFIVTASRDGIVKVWK) is one WD 7 repeat.

This sequence belongs to the protein kinase superfamily. Ser/Thr protein kinase family. Component of the PI3K (PI3KC3/PI3K-III/class III phosphatidylinositol 3-kinase) complex the core of which is composed of the catalytic subunit PIK3C3, the regulatory subunit PIK3R4 and BECN1 associating with additional regulatory/auxiliary subunits to form alternative complex forms. Alternative complex forms containing a fourth regulatory subunit in a mutually exclusive manner are PI3K complex I (PI3KC3-C1) containing ATG14, and PI3K complex II (PI3KC3-C2) containing UVRAG. PI3KC3-C1 displays a V-shaped architecture with PIK3R4 serving as a bridge between PIK3C3 and the ATG14:BECN1 subcomplex. Both, PI3KC3-C1 and PI3KC3-C2, can associate with further regulatory subunits, such as RUBCN, SH3GLB1/Bif-1, AMBRA1 and NRBF2. PI3KC3-C1 probably associates with PIK3CB. Interacts with RAB7A in the presence of PIK3C3/VPS34. Interacts with NRBF2. Interacts with ARMC3. Mn(2+) is required as a cofactor. In terms of processing, myristoylated. Post-translationally, probably autophosphorylated.

It is found in the late endosome. It localises to the cytoplasmic vesicle. Its subcellular location is the autophagosome. The protein localises to the membrane. The enzyme catalyses L-seryl-[protein] + ATP = O-phospho-L-seryl-[protein] + ADP + H(+). It carries out the reaction L-threonyl-[protein] + ATP = O-phospho-L-threonyl-[protein] + ADP + H(+). Functionally, regulatory subunit of the PI3K complex that mediates formation of phosphatidylinositol 3-phosphate; different complex forms are believed to play a role in multiple membrane trafficking pathways: PI3KC3-C1 is involved in initiation of autophagosomes and PI3KC3-C2 in maturation of autophagosomes and endocytosis. Involved in regulation of degradative endocytic trafficking and cytokinesis, probably in the context of PI3KC3-C2. This chain is Phosphoinositide 3-kinase regulatory subunit 4 (Pik3r4), found in Rattus norvegicus (Rat).